A 222-amino-acid chain; its full sequence is Vesicle-associated membrane protein 724 (222 aa).

Residues M1–L197 lie on the Cytoplasmic side of the membrane. The Longin domain occupies F10–M115. The v-SNARE coiled-coil homology domain occupies K131–Q191. A helical; Anchor for type IV membrane protein membrane pass occupies residues V198 to F218. Over N219–D222 the chain is Vesicular.

The protein belongs to the synaptobrevin family. As to expression, expressed in flowers, leaves, stems and roots.

It localises to the cell membrane. The protein resides in the early endosome membrane. In terms of biological role, involved in the targeting and/or fusion of transport vesicles to their target membrane. The polypeptide is Vesicle-associated membrane protein 724 (Arabidopsis thaliana (Mouse-ear cress)).